The sequence spans 462 residues: L-seryl-tRNA(Sec) selenium transferase (462 aa).

Residue Lys-294 is modified to N6-(pyridoxal phosphate)lysine.

The protein belongs to the SelA family. In terms of assembly, homodecamer; pentamer of dimers. Binds only one seryl-tRNA(Sec) per dimer. Pyridoxal 5'-phosphate serves as cofactor.

Its subcellular location is the cytoplasm. The enzyme catalyses L-seryl-tRNA(Sec) + selenophosphate + H(+) = L-selenocysteinyl-tRNA(Sec) + phosphate. The protein operates within aminoacyl-tRNA biosynthesis; selenocysteinyl-tRNA(Sec) biosynthesis; selenocysteinyl-tRNA(Sec) from L-seryl-tRNA(Sec) (bacterial route): step 1/1. In terms of biological role, converts seryl-tRNA(Sec) to selenocysteinyl-tRNA(Sec) required for selenoprotein biosynthesis. This is L-seryl-tRNA(Sec) selenium transferase from Yersinia pseudotuberculosis serotype O:1b (strain IP 31758).